A 341-amino-acid chain; its full sequence is GTP 3',8-cyclase (341 aa).

The region spanning 11–231 is the Radical SAM core domain; it reads KRNRPLRDLR…DLINKHMPVE (221 aa). R20 provides a ligand contact to GTP. C27 and C31 together coordinate [4Fe-4S] cluster. S-adenosyl-L-methionine is bound at residue Y33. C34 provides a ligand contact to [4Fe-4S] cluster. R75 is a GTP binding site. Residue G79 coordinates S-adenosyl-L-methionine. T106 lines the GTP pocket. S130 is a binding site for S-adenosyl-L-methionine. K167 serves as a coordination point for GTP. Residue M201 participates in S-adenosyl-L-methionine binding. The [4Fe-4S] cluster site is built by C265 and C268. 270-272 contributes to the GTP binding site; it reads RAR. C282 lines the [4Fe-4S] cluster pocket.

The protein belongs to the radical SAM superfamily. MoaA family. As to quaternary structure, monomer and homodimer. [4Fe-4S] cluster is required as a cofactor.

The enzyme catalyses GTP + AH2 + S-adenosyl-L-methionine = (8S)-3',8-cyclo-7,8-dihydroguanosine 5'-triphosphate + 5'-deoxyadenosine + L-methionine + A + H(+). It participates in cofactor biosynthesis; molybdopterin biosynthesis. Functionally, catalyzes the cyclization of GTP to (8S)-3',8-cyclo-7,8-dihydroguanosine 5'-triphosphate. Required for both nitrate assimilation and respiration. The polypeptide is GTP 3',8-cyclase (Bacillus subtilis (strain 168)).